The sequence spans 199 residues: MSERLIQLAANLKKVLGKRIQSVEIALGEVTVVVYADTYFESAMLMRDDPSLAFEQLIDLCGVDYQDFRDGAWAGQRFGVVSHLLSLEHNWRLRVRVFAPDDSYPLVASVSPVWNSANWFEREAFDLYGILFDGHDDLRRILTDYGFIGHPFRKDFPISGNVEMRYDPELKRVIYQPVTIEAREITPRIVREEQYGGPV.

Belongs to the complex I 30 kDa subunit family. NDH-1 is composed of 14 different subunits. Subunits NuoB, C, D, E, F, and G constitute the peripheral sector of the complex.

The protein resides in the cell inner membrane. It catalyses the reaction a quinone + NADH + 5 H(+)(in) = a quinol + NAD(+) + 4 H(+)(out). NDH-1 shuttles electrons from NADH, via FMN and iron-sulfur (Fe-S) centers, to quinones in the respiratory chain. The immediate electron acceptor for the enzyme in this species is believed to be ubiquinone. Couples the redox reaction to proton translocation (for every two electrons transferred, four hydrogen ions are translocated across the cytoplasmic membrane), and thus conserves the redox energy in a proton gradient. In Polynucleobacter necessarius subsp. necessarius (strain STIR1), this protein is NADH-quinone oxidoreductase subunit C.